We begin with the raw amino-acid sequence, 345 residues long: uncharacterized protein (345 aa).

The protein localises to the cell membrane. In terms of biological role, involved in potassium and divalent cation transport. Enhances the transport activity of the cation/potassium transporter CzcD. This is an uncharacterized protein from Bacillus subtilis (strain 168).